We begin with the raw amino-acid sequence, 432 residues long: D-amino acid dehydrogenase 1 (432 aa).

FAD is bound at residue valine 3–tyrosine 17.

The protein belongs to the DadA oxidoreductase family. The cofactor is FAD.

It carries out the reaction a D-alpha-amino acid + A + H2O = a 2-oxocarboxylate + AH2 + NH4(+). In terms of biological role, oxidative deamination of D-amino acids. This chain is D-amino acid dehydrogenase 1 (dadA1), found in Pseudomonas putida (strain ATCC 47054 / DSM 6125 / CFBP 8728 / NCIMB 11950 / KT2440).